A 232-amino-acid chain; its full sequence is Putative N-acetylmannosamine-6-phosphate 2-epimerase (232 aa).

Belongs to the NanE family.

It carries out the reaction an N-acyl-D-glucosamine 6-phosphate = an N-acyl-D-mannosamine 6-phosphate. It participates in amino-sugar metabolism; N-acetylneuraminate degradation; D-fructose 6-phosphate from N-acetylneuraminate: step 3/5. Converts N-acetylmannosamine-6-phosphate (ManNAc-6-P) to N-acetylglucosamine-6-phosphate (GlcNAc-6-P). The sequence is that of Putative N-acetylmannosamine-6-phosphate 2-epimerase from Synechococcus elongatus (strain ATCC 33912 / PCC 7942 / FACHB-805) (Anacystis nidulans R2).